Reading from the N-terminus, the 715-residue chain is Fatty acid oxidation complex subunit alpha (715 aa).

Residues 1 to 190 (MIYEGKAITV…KVGAVDAVVA (190 aa)) form an enoyl-CoA hydratase/isomerase region. Substrate is bound at residue D297. Residues 312 to 715 (HDVKQAAVLG…MAKNGQRFFN (404 aa)) are 3-hydroxyacyl-CoA dehydrogenase. NAD(+)-binding positions include M325, D344, 401–403 (VVE), K408, and S430. Catalysis depends on H451, which acts as the For 3-hydroxyacyl-CoA dehydrogenase activity. An NAD(+)-binding site is contributed by N454. Residues N501 and Y660 each coordinate substrate.

The protein in the N-terminal section; belongs to the enoyl-CoA hydratase/isomerase family. It in the C-terminal section; belongs to the 3-hydroxyacyl-CoA dehydrogenase family. In terms of assembly, heterotetramer of two alpha chains (FadB) and two beta chains (FadA).

The enzyme catalyses a (3S)-3-hydroxyacyl-CoA + NAD(+) = a 3-oxoacyl-CoA + NADH + H(+). It carries out the reaction a (3S)-3-hydroxyacyl-CoA = a (2E)-enoyl-CoA + H2O. It catalyses the reaction a 4-saturated-(3S)-3-hydroxyacyl-CoA = a (3E)-enoyl-CoA + H2O. The catalysed reaction is (3S)-3-hydroxybutanoyl-CoA = (3R)-3-hydroxybutanoyl-CoA. The enzyme catalyses a (3Z)-enoyl-CoA = a 4-saturated (2E)-enoyl-CoA. It carries out the reaction a (3E)-enoyl-CoA = a 4-saturated (2E)-enoyl-CoA. It functions in the pathway lipid metabolism; fatty acid beta-oxidation. Involved in the aerobic and anaerobic degradation of long-chain fatty acids via beta-oxidation cycle. Catalyzes the formation of 3-oxoacyl-CoA from enoyl-CoA via L-3-hydroxyacyl-CoA. It can also use D-3-hydroxyacyl-CoA and cis-3-enoyl-CoA as substrate. In Pseudomonas putida (strain ATCC 700007 / DSM 6899 / JCM 31910 / BCRC 17059 / LMG 24140 / F1), this protein is Fatty acid oxidation complex subunit alpha.